Consider the following 637-residue polypeptide: Chaperone protein HtpG (637 aa).

The a; substrate-binding stretch occupies residues 1 to 345 (MSQQETHGFQ…SNDLPLNVSR (345 aa)). A b region spans residues 346 to 562 (EILQDNHITK…EGEMSTQMIK (217 aa)). The segment at 563-637 (LMQAAGQPVP…MNQMLLANMK (75 aa)) is c.

Belongs to the heat shock protein 90 family. Homodimer.

The protein resides in the cytoplasm. Functionally, molecular chaperone. Has ATPase activity. The polypeptide is Chaperone protein HtpG (Shewanella putrefaciens (strain CN-32 / ATCC BAA-453)).